The following is a 32-amino-acid chain: Secreted proteinase (32 aa).

Residues 1–32 (DTANDPKYGSQYAPQKVNADVDQGVXXXHPEL) are disordered. The active-site Charge relay system is the aspartate 22.

This sequence belongs to the peptidase S8 family.

The protein localises to the secreted. In Haloferax mediterranei (Halobacterium mediterranei), this protein is Secreted proteinase.